Reading from the N-terminus, the 211-residue chain is Adenylate kinase (211 aa).

13–18 serves as a coordination point for ATP; that stretch reads GAGKGT. The segment at 33–62 is NMP; the sequence is STGDILRVAVANKTKLGLEAKKFMDAGQLV. AMP is bound by residues Thr34, Arg39, 60–62, 88–91, and Gln95; these read QLV and GFPR. The LID stretch occupies residues 129 to 161; that stretch reads GRRTSKVTGKIYHIKFNPPVDEKPEDLVQRADD. Residues Arg130 and 139 to 140 each bind ATP; that span reads IY. Arg158 and Arg169 together coordinate AMP. Lys197 contacts ATP.

It belongs to the adenylate kinase family. As to quaternary structure, monomer.

It localises to the cytoplasm. The catalysed reaction is AMP + ATP = 2 ADP. It functions in the pathway purine metabolism; AMP biosynthesis via salvage pathway; AMP from ADP: step 1/1. Catalyzes the reversible transfer of the terminal phosphate group between ATP and AMP. Plays an important role in cellular energy homeostasis and in adenine nucleotide metabolism. This Fusobacterium nucleatum subsp. nucleatum (strain ATCC 25586 / DSM 15643 / BCRC 10681 / CIP 101130 / JCM 8532 / KCTC 2640 / LMG 13131 / VPI 4355) protein is Adenylate kinase.